The sequence spans 159 residues: Serine-protein kinase RsbW (159 aa).

Belongs to the anti-sigma-factor family.

It carries out the reaction L-seryl-[protein] + ATP = O-phospho-L-seryl-[protein] + ADP + H(+). The enzyme catalyses L-threonyl-[protein] + ATP = O-phospho-L-threonyl-[protein] + ADP + H(+). Negative regulator of sigma-B activity. Phosphorylates and inactivates its specific antagonist protein, RsbV. Upon phosphorylation of RsbV, RsbW is released and binds to sigma-B, thereby blocking its ability to form an RNA polymerase holoenzyme (E-sigma-B). This chain is Serine-protein kinase RsbW, found in Staphylococcus aureus.